The chain runs to 678 residues: DNA gyrase subunit B (678 aa).

Residues 456–570 (SELYVVEGDS…HGYVFLAQPP (115 aa)) enclose the Toprim domain. 3 residues coordinate Mg(2+): E462, D535, and D537.

This sequence belongs to the type II topoisomerase GyrB family. As to quaternary structure, heterotetramer, composed of two GyrA and two GyrB chains. In the heterotetramer, GyrA contains the active site tyrosine that forms a transient covalent intermediate with the DNA, while GyrB binds cofactors catalyzes ATP hydrolysis. Mg(2+) is required as a cofactor. Mn(2+) serves as cofactor. Requires Ca(2+) as cofactor.

It localises to the cytoplasm. It catalyses the reaction ATP-dependent breakage, passage and rejoining of double-stranded DNA.. With respect to regulation, DNA supercoiling is inhibited by fluoroquinolones; IC(50) 1 ug/ml for sitafloxacin. Functionally, a type II topoisomerase that negatively supercoils closed circular double-stranded (ds) DNA in an ATP-dependent manner to modulate DNA topology and maintain chromosomes in an underwound state. Negative supercoiling favors strand separation, and DNA replication, transcription, recombination and repair, all of which involve strand separation. Also able to catalyze the interconversion of other topological isomers of dsDNA rings, including catenanes and knotted rings. Type II topoisomerases break and join 2 DNA strands simultaneously in an ATP-dependent manner. This Mycobacterium leprae (strain TN) protein is DNA gyrase subunit B.